Consider the following 294-residue polypeptide: uncharacterized protein (294 aa).

This is an uncharacterized protein from Diadromus pulchellus idnoreovirus 1 (DpIRV-1).